Here is a 669-residue protein sequence, read N- to C-terminus: DNA ligase (669 aa).

Residues 34–38, 83–84, and Glu114 contribute to the NAD(+) site; these read DAEYD and SL. The active-site N6-AMP-lysine intermediate is the Lys116. NAD(+)-binding residues include Arg137, Glu171, Lys287, and Lys311. Zn(2+) contacts are provided by Cys405, Cys408, Cys423, and Cys428. Residues 591–669 form the BRCT domain; it reads NVESYFAGKT…EERFLQELNK (79 aa).

The protein belongs to the NAD-dependent DNA ligase family. LigA subfamily. Mg(2+) is required as a cofactor. Mn(2+) serves as cofactor.

The enzyme catalyses NAD(+) + (deoxyribonucleotide)n-3'-hydroxyl + 5'-phospho-(deoxyribonucleotide)m = (deoxyribonucleotide)n+m + AMP + beta-nicotinamide D-nucleotide.. In terms of biological role, DNA ligase that catalyzes the formation of phosphodiester linkages between 5'-phosphoryl and 3'-hydroxyl groups in double-stranded DNA using NAD as a coenzyme and as the energy source for the reaction. It is essential for DNA replication and repair of damaged DNA. The protein is DNA ligase of Bacillus anthracis (strain A0248).